Reading from the N-terminus, the 430-residue chain is uncharacterized protein (430 aa).

12 helical membrane-spanning segments follow: residues 18 to 38 (LFLL…NTFV), 49 to 69 (FIDL…TFYL), 80 to 100 (VFIL…VLLA), 109 to 129 (VLIG…FNVL), 145 to 165 (FMGI…GFVI), 175 to 195 (TVIF…SFFL), 235 to 255 (IFVF…LALG), 256 to 276 (TFGL…SRLI), 285 to 305 (ILLG…HMSF), 307 to 327 (TLLT…VPYV), 353 to 373 (MFLN…VALL), and 377 to 397 (VGIP…YYFV). Residues 407 to 430 (GENETMEEDGQKRVTEPTLLKGER) are disordered. Positions 415 to 430 (DGQKRVTEPTLLKGER) are enriched in basic and acidic residues.

The protein resides in the cell membrane. This is an uncharacterized protein from Bacillus subtilis (strain 168).